Here is a 341-residue protein sequence, read N- to C-terminus: Phenylalanine--tRNA ligase alpha subunit (341 aa).

Mg(2+) is bound at residue E256.

It belongs to the class-II aminoacyl-tRNA synthetase family. Phe-tRNA synthetase alpha subunit type 1 subfamily. In terms of assembly, tetramer of two alpha and two beta subunits. Mg(2+) serves as cofactor.

Its subcellular location is the cytoplasm. It catalyses the reaction tRNA(Phe) + L-phenylalanine + ATP = L-phenylalanyl-tRNA(Phe) + AMP + diphosphate + H(+). The protein is Phenylalanine--tRNA ligase alpha subunit of Chlamydia felis (strain Fe/C-56) (Chlamydophila felis).